The primary structure comprises 191 residues: Orotate phosphoribosyltransferase (191 aa).

114-122 (EDVVTTGKS) provides a ligand contact to 5-phospho-alpha-D-ribose 1-diphosphate. Orotate is bound by residues Thr-118 and Arg-146.

It belongs to the purine/pyrimidine phosphoribosyltransferase family. PyrE subfamily. In terms of assembly, homodimer. Mg(2+) serves as cofactor.

It carries out the reaction orotidine 5'-phosphate + diphosphate = orotate + 5-phospho-alpha-D-ribose 1-diphosphate. The protein operates within pyrimidine metabolism; UMP biosynthesis via de novo pathway; UMP from orotate: step 1/2. Its function is as follows. Catalyzes the transfer of a ribosyl phosphate group from 5-phosphoribose 1-diphosphate to orotate, leading to the formation of orotidine monophosphate (OMP). This chain is Orotate phosphoribosyltransferase, found in Clostridium botulinum (strain Kyoto / Type A2).